The primary structure comprises 394 residues: Ribose-phosphate pyrophosphokinase 5, chloroplastic (394 aa).

A chloroplast-targeting transit peptide spans 1-33; that stretch reads MASIVQPSPTFPALNLRRSSLIRPPSSVRFPLK. Residues Asp-202, His-204, Asp-213, and Asp-217 each contribute to the Mg(2+) site. The tract at residues 288 to 303 is binding of phosphoribosylpyrophosphate; the sequence is GKVAIMVDDMIDTAGT.

Belongs to the ribose-phosphate pyrophosphokinase family.

It localises to the plastid. The protein resides in the chloroplast. It catalyses the reaction D-ribose 5-phosphate + ATP = 5-phospho-alpha-D-ribose 1-diphosphate + AMP + H(+). The chain is Ribose-phosphate pyrophosphokinase 5, chloroplastic (PRS5) from Arabidopsis thaliana (Mouse-ear cress).